We begin with the raw amino-acid sequence, 257 residues long: Lipopolysaccharide core biosynthesis glycosyltransferase KdtX (257 aa).

It belongs to the glycosyltransferase 2 family. WaaE/KdtX subfamily.

The protein operates within bacterial outer membrane biogenesis; LPS core biosynthesis. The protein is Lipopolysaccharide core biosynthesis glycosyltransferase KdtX (kdtX) of Serratia marcescens.